A 391-amino-acid chain; its full sequence is uncharacterized protein (391 aa).

One can recognise an HTH arsR-type domain in the interval 235 to 330; that stretch reads VFILSRINLL…LYLKNETQKS (96 aa).

This is an uncharacterized protein from Methanocaldococcus jannaschii (strain ATCC 43067 / DSM 2661 / JAL-1 / JCM 10045 / NBRC 100440) (Methanococcus jannaschii).